The chain runs to 350 residues: Tsukushi (350 aa).

The signal sequence occupies residues 1 to 17 (MAPSWLFLLFIPGMVGS). The LRRNT domain occupies 18 to 59 (SRSCFPGCQCIVDNFGLFHSFSLTKVDCSGVGPHVVPVSIPL). 10 LRR repeats span residues 60 to 81 (DTSY…VLSG), 86 to 107 (TLIN…TFSK), 110 to 131 (YLES…SFLY), 133 to 154 (RLTE…AFTL), 159 to 180 (RSMT…AERP), 183 to 203 (NIHS…LHGI), 204 to 225 (PLRH…SFLG), 228 to 250 (GLTH…SFKT), 253 to 275 (SLLD…MFFG), and 278 to 299 (SLQE…IMLN). N-linked (GlcNAc...) asparagine glycans are attached at residues Asn-75 and Asn-91.

As to quaternary structure, interacts with bmp4. Interacts with dll1 (via extracellular region). Interacts with fgf8; inhibits fgf8 signaling. Interacts with nodal2/Xnr2; enhances nodal2 activity.

Its subcellular location is the secreted. Functionally, contributes to various developmental events through its interactions with multiple signaling pathways. Dorsalizing factor which functions as an inhibitor of bone morphogenetic proteins (BMP) during gastrulation. Promotes dll1-dependent activation of Notch signaling and is required for neural crest formation. Induces endoderm and dorsal mesoderm formation by enhancing nodal2/Xnr2 activity while inhibiting ventrolateral mesoderm formation through inhibition of fgf8. This is Tsukushi (tsku) from Xenopus tropicalis (Western clawed frog).